A 250-amino-acid polypeptide reads, in one-letter code: S-adenosyl-L-methionine-dependent 2-deoxy-scyllo-inosamine dehydrogenase (250 aa).

[4Fe-4S] cluster-binding residues include Cys-16, Cys-20, Cys-23, Cys-169, Cys-187, and Glu-223.

Belongs to the radical SAM superfamily. The cofactor is [4Fe-4S] cluster.

The enzyme catalyses 2-deoxy-scyllo-inosamine + S-adenosyl-L-methionine = 3-amino-2,3-dideoxy-scyllo-inosose + 5'-deoxyadenosine + L-methionine + H(+). It functions in the pathway antibiotic biosynthesis; butirosin biosynthesis. In terms of biological role, catalyzes the radical S-adenosyl-L-methionine (SAM)-dependent two-electron oxidation of 2-deoxy-scyllo-inosamine (DOIA) to amino-dideoxy-scyllo-inosose (amino-DOI) in the biosynthetic pathway of butirosin. The sequence is that of S-adenosyl-L-methionine-dependent 2-deoxy-scyllo-inosamine dehydrogenase (btrN) from Niallia circulans (Bacillus circulans).